The sequence spans 848 residues: MDRPQDPFNSRGIAVPPAVKMRNMAGNNSPWIDPLPPPMNARNGLANASLFSTSLPVLPHEKINFLDSARGTPLMDDASAKLKELDDDPEGKDYKFDFDLRQIDDLLPNEDDLFAGITNEIEPAGQTNSMEELEEFDVFGSGGGMELDTDPVESITAGLGNTSIADGLRGNGVNHFGPSNSASTVAGEHPYGEHPSRTLFVRNINSNVDDTELRSLFEQYGDIRTLYTATKHRGFVMISYFDIRAARGAMRGLQNKPLRRRKLDIHFSIPKENPSDKDLNQGTLVIFNLDPSVSNEEVRQIFGTYGEVKEIRETPNKKHHKFIEFYDVRAAEAALRSLNKSEIAGKRIKLEPSRPGGTRRNLMQQLGHDIDQDEPRSYRIPHVGSPIASSPPGAWAQYSSPTDNNLLQAFNASPTGNGMSPIGMPPSLISNAVKIAPIGKDSNWSKYDKVFSNNNQPHGAAFQHSHSYQDHKSEHMSSSPGTLTGPEFLWGSPKPYSEHAQSPIWRPPAIGHAIPSNTRSQGQGLLYGGRQASLFGSQDQLHHHHVGSAPSGAPFESHFGFLPESPETSYMNQVRFGNIGNIGSGRNGTGLMLNMAARASVNPVSALSGNMSDNNSSSFRPILSPRLGQSFYGNPTYQGPGSFGLDNSIERGRNRRVDSSVFQADSKKQYQLDLEKIRKGDDTRTTLMIKNIPNKYTSKMLLAAIDEFHKGTYDFFYLPIDFKNKCNVGYAFINMISPVHIVSFYQAFNGKKWEKFNSEKVASLAYARIQGRTALISHFQNSSLMNEDKRCRPILFHSNGPDAGNQEPFPINGICIHMPLEDGAIATGDPFGNEEDNNQNERTAGEEL.

2 consecutive RRM domains span residues 197–270 and 282–355; these read RTLF…FSIP and GTLV…PSRP. 3 disordered regions span residues 370 to 400, 455 to 523, and 826 to 848; these read IDQD…QYSS, NQPH…SQGQ, and ATGD…GEEL.

Probable RNA-binding protein that may play a role in growth regulation. This Oryza sativa subsp. japonica (Rice) protein is Protein MEI2-like 2 (ML2).